The primary structure comprises 120 residues: Glutamate--tRNA ligase (120 aa).

The protein belongs to the class-I aminoacyl-tRNA synthetase family. Glutamate--tRNA ligase type 1 subfamily. Monomer.

It localises to the cytoplasm. The catalysed reaction is tRNA(Glu) + L-glutamate + ATP = L-glutamyl-tRNA(Glu) + AMP + diphosphate. Catalyzes the attachment of glutamate to tRNA(Glu) in a two-step reaction: glutamate is first activated by ATP to form Glu-AMP and then transferred to the acceptor end of tRNA(Glu). The sequence is that of Glutamate--tRNA ligase (gltX) from Staphylococcus xylosus.